The chain runs to 67 residues: ATP synthase F(0) complex subunit 8 (67 aa).

Residues 8 to 24 form a helical membrane-spanning segment; the sequence is TWFTTILATITTLFILF. Lys54 is modified (N6-acetyllysine; alternate). Residue Lys54 is modified to N6-succinyllysine; alternate. Lys57 is subject to N6-acetyllysine.

Belongs to the ATPase protein 8 family. In terms of assembly, component of the ATP synthase complex composed at least of ATP5F1A/subunit alpha, ATP5F1B/subunit beta, ATP5MC1/subunit c (homooctomer), MT-ATP6/subunit a, MT-ATP8/subunit 8, ATP5ME/subunit e, ATP5MF/subunit f, ATP5MG/subunit g, ATP5MK/subunit k, ATP5MJ/subunit j, ATP5F1C/subunit gamma, ATP5F1D/subunit delta, ATP5F1E/subunit epsilon, ATP5PF/subunit F6, ATP5PB/subunit b, ATP5PD/subunit d, ATP5PO/subunit OSCP. ATP synthase complex consists of a soluble F(1) head domain (subunits alpha(3) and beta(3)) - the catalytic core - and a membrane F(0) domain - the membrane proton channel (subunits c, a, 8, e, f, g, k and j). These two domains are linked by a central stalk (subunits gamma, delta, and epsilon) rotating inside the F1 region and a stationary peripheral stalk (subunits F6, b, d, and OSCP). Interacts with PRICKLE3.

The protein resides in the mitochondrion membrane. Its function is as follows. Subunit 8, of the mitochondrial membrane ATP synthase complex (F(1)F(0) ATP synthase or Complex V) that produces ATP from ADP in the presence of a proton gradient across the membrane which is generated by electron transport complexes of the respiratory chain. ATP synthase complex consist of a soluble F(1) head domain - the catalytic core - and a membrane F(1) domain - the membrane proton channel. These two domains are linked by a central stalk rotating inside the F(1) region and a stationary peripheral stalk. During catalysis, ATP synthesis in the catalytic domain of F(1) is coupled via a rotary mechanism of the central stalk subunits to proton translocation. In vivo, can only synthesize ATP although its ATP hydrolase activity can be activated artificially in vitro. Part of the complex F(0) domain. In Talpa europaea (European mole), this protein is ATP synthase F(0) complex subunit 8.